The chain runs to 204 residues: High frequency lysogenization protein HflD homolog (204 aa).

It belongs to the HflD family.

Its subcellular location is the cytoplasm. It localises to the cell inner membrane. This chain is High frequency lysogenization protein HflD homolog, found in Actinobacillus succinogenes (strain ATCC 55618 / DSM 22257 / CCUG 43843 / 130Z).